Reading from the N-terminus, the 334-residue chain is S-adenosylmethionine decarboxylase proenzyme 2 (334 aa).

Residue Phe7 participates in substrate binding. Residues Glu8 and Glu11 contribute to the active site. Substrate is bound at residue Glu67. Ser68 functions as the Schiff-base intermediate with substrate; via pyruvic acid in the catalytic mechanism. Ser68 is modified (pyruvic acid (Ser); by autocatalysis). The Proton donor; for catalytic activity role is filled by Cys82. Phe223 lines the substrate pocket. Active-site proton acceptor; for processing activity residues include Ser229 and His243. Glu247 contacts substrate. Position 298 is a phosphoserine (Ser298).

Belongs to the eukaryotic AdoMetDC family. Heterotetramer of two alpha and two beta chains. Pyruvate is required as a cofactor. In terms of processing, is synthesized initially as an inactive proenzyme. Formation of the active enzyme involves a self-maturation process in which the active site pyruvoyl group is generated from an internal serine residue via an autocatalytic post-translational modification. Two non-identical subunits are generated from the proenzyme in this reaction, and the pyruvate is formed at the N-terminus of the alpha chain, which is derived from the carboxyl end of the proenzyme. The post-translation cleavage follows an unusual pathway, termed non-hydrolytic serinolysis, in which the side chain hydroxyl group of the serine supplies its oxygen atom to form the C-terminus of the beta chain, while the remainder of the serine residue undergoes an oxidative deamination to produce ammonia and the pyruvoyl group blocking the N-terminus of the alpha chain.

The enzyme catalyses S-adenosyl-L-methionine + H(+) = S-adenosyl 3-(methylsulfanyl)propylamine + CO2. Its pathway is amine and polyamine biosynthesis; S-adenosylmethioninamine biosynthesis; S-adenosylmethioninamine from S-adenosyl-L-methionine: step 1/1. Functionally, essential for biosynthesis of the polyamines spermidine and spermine. Promotes maintenance and self-renewal of embryonic stem cells, by maintaining spermine levels. The polypeptide is S-adenosylmethionine decarboxylase proenzyme 2 (Amd2) (Mus spretus (Western Mediterranean mouse)).